The following is a 160-amino-acid chain: Sulfur-rich protein (160 aa).

Helical transmembrane passes span 63–83 and 92–112; these read ITMVVLGIILLIAGLALTFVL and FLFLIPAVIGLVKLLATSVCM.

Its subcellular location is the membrane. The chain is Sulfur-rich protein (srp) from Chlamydophila psittaci (strain ATCC VR-125 / 6BC) (Chlamydia psittaci).